The following is a 679-amino-acid chain: Kelch-like protein diablo (679 aa).

A compositionally biased stretch (gly residues) spans 1 to 48 (MGDLPGGGGGAAGGAGAAGGGGGGGNGAAGSSSSGGGASGSGGGGPGS). A disordered region spans residues 1–84 (MGDLPGGGGG…RLSHTSEKHP (84 aa)). In terms of domain architecture, BTB spans 101–168 (CDVVLNVGGR…CYTAHIIVEE (68 aa)). Positions 203–305 (CLGIRAFADT…SPKFLVGTVG (103 aa)) constitute a BACK domain. Kelch repeat units follow at residues 352-398 (VLFA…VLND), 400-446 (LYAV…VLDG), 447-493 (FLYA…VLGG), 495-540 (LYAI…VFNN), 542-587 (IYAV…VVNG), and 588-634 (QLYA…VMRA). Residues 643-679 (CDNNSSNNNNNNYNLKHQQQQPQQQQQQQQQQTQQQL) are disordered. Residues 645 to 679 (NNSSNNNNNNYNLKHQQQQPQQQQQQQQQQTQQQL) show a composition bias toward low complexity.

It functions in the pathway protein modification; protein ubiquitination. In terms of biological role, probable substrate-specific adapter of an E3 ubiquitin-protein ligase complex which mediates the ubiquitination and subsequent proteasomal degradation of target proteins. May have a role in synapse differentiation and growth. The sequence is that of Kelch-like protein diablo from Drosophila willistoni (Fruit fly).